A 189-amino-acid polypeptide reads, in one-letter code: Protein Flattop (189 aa).

The interval 112–189 is disordered; that stretch reads EISGKPFDPD…PPPSPCKSTK (78 aa). Residues 137-148 show a composition bias toward polar residues; it reads APNPTIIPSSPV. Pro residues predominate over residues 178 to 189; sequence NNPPPSPCKSTK.

This sequence belongs to the Flattop family. In terms of assembly, microtubule inner protein component of sperm flagellar doublet microtubules. Interacts with DLG3. In terms of tissue distribution, expressed in mono- and multiciliated tissues during planar cell polarity acquisition.

It is found in the cytoplasm. The protein resides in the cytoskeleton. The protein localises to the cilium basal body. Its subcellular location is the cilium axoneme. It localises to the flagellum axoneme. It is found in the apical cell membrane. In terms of biological role, microtubule inner protein (MIP) part of the dynein-decorated doublet microtubules (DMTs) in cilia axoneme. Acts as a regulator of cilium basal body docking and positioning in mono- and multiciliated cells. Regulates basal body docking and cilia formation in multiciliated lung cells. Regulates kinocilium positioning and stereocilia bundle morphogenesis in the inner ear. The protein is Protein Flattop of Mus musculus (Mouse).